Consider the following 711-residue polypeptide: Hepatocyte growth factor-like protein (711 aa).

The signal sequence occupies residues 1-18; that stretch reads MGWLPLLLLLTQCLGVPG. A PAN domain is found at 21-105; it reads SPLNDFQVLR…GRCDLFQKKD (85 aa). Intrachain disulfides connect cysteine 56/cysteine 78, cysteine 60/cysteine 66, cysteine 110/cysteine 186, cysteine 131/cysteine 169, cysteine 157/cysteine 181, cysteine 191/cysteine 268, cysteine 194/cysteine 324, cysteine 212/cysteine 251, cysteine 240/cysteine 263, cysteine 283/cysteine 361, cysteine 304/cysteine 343, cysteine 332/cysteine 355, cysteine 370/cysteine 448, cysteine 391/cysteine 431, cysteine 419/cysteine 443, cysteine 468/cysteine 588, cysteine 507/cysteine 523, cysteine 602/cysteine 667, cysteine 632/cysteine 646, and cysteine 657/cysteine 685. N-linked (GlcNAc...) asparagine glycosylation occurs at asparagine 72. Kringle domains are found at residues 110 to 186, 191 to 268, 283 to 361, and 370 to 448; these read CIMN…IKSC, CVWC…LPRC, CFRG…IRRC, and CYHG…LRRC. N-linked (GlcNAc...) asparagine glycosylation occurs at asparagine 296. Positions 484–709 constitute a Peptidase S1 domain; it reads VVGGHPGNSP…FVDWIHKVMR (226 aa). Asparagine 615 carries N-linked (GlcNAc...) asparagine glycosylation.

Belongs to the peptidase S1 family. Plasminogen subfamily. In terms of assembly, dimer of an alpha chain and a beta chain linked by a disulfide bond. Interacts (via beta chain) with MST1R (via SEMA domain). Post-translationally, cleaved after Arg-483, probably by HPN/Hepsin, to yield the active form consisting of two disulfide-linked chains.

Its subcellular location is the secreted. In Homo sapiens (Human), this protein is Hepatocyte growth factor-like protein (MST1).